A 360-amino-acid polypeptide reads, in one-letter code: Geranylgeranyl pyrophosphate synthase 3, chloroplastic (360 aa).

The N-terminal 39 residues, 1-39 (MATTVHLSSFSLFIQSRGRRDNSISSVKSLKKRTGLSPS), are a transit peptide targeting the chloroplast. A disordered region spans residues 24–54 (ISSVKSLKKRTGLSPSSALTSQGGRDMIPPE). Polar residues predominate over residues 36–46 (LSPSSALTSQG). Residues lysine 106, arginine 109, and histidine 138 each contribute to the isopentenyl diphosphate site. Mg(2+) contacts are provided by aspartate 145 and aspartate 151. Arginine 156 lines the dimethylallyl diphosphate pocket. An isopentenyl diphosphate-binding site is contributed by arginine 157. Lysine 245, threonine 246, glutamine 283, lysine 300, and lysine 310 together coordinate dimethylallyl diphosphate.

The protein belongs to the FPP/GGPP synthase family. In terms of assembly, monomer. Mg(2+) serves as cofactor. In terms of tissue distribution, mainly expressed in roots.

Its subcellular location is the plastid. It localises to the chloroplast. It catalyses the reaction isopentenyl diphosphate + dimethylallyl diphosphate = (2E)-geranyl diphosphate + diphosphate. It carries out the reaction isopentenyl diphosphate + (2E)-geranyl diphosphate = (2E,6E)-farnesyl diphosphate + diphosphate. The enzyme catalyses isopentenyl diphosphate + (2E,6E)-farnesyl diphosphate = (2E,6E,10E)-geranylgeranyl diphosphate + diphosphate. Its pathway is isoprenoid biosynthesis; farnesyl diphosphate biosynthesis; farnesyl diphosphate from geranyl diphosphate and isopentenyl diphosphate: step 1/1. The protein operates within isoprenoid biosynthesis; geranyl diphosphate biosynthesis; geranyl diphosphate from dimethylallyl diphosphate and isopentenyl diphosphate: step 1/1. It participates in isoprenoid biosynthesis; geranylgeranyl diphosphate biosynthesis; geranylgeranyl diphosphate from farnesyl diphosphate and isopentenyl diphosphate: step 1/1. Catalyzes the trans-addition of the three molecules of IPP onto DMAPP to form geranylgeranyl pyrophosphate. The polypeptide is Geranylgeranyl pyrophosphate synthase 3, chloroplastic (GGPP3) (Arabidopsis thaliana (Mouse-ear cress)).